Here is a 465-residue protein sequence, read N- to C-terminus: E3 ubiquitin-protein ligase parkin (465 aa).

Positions 1–76 (MIVFVRFNSS…VHIVQRPQRK (76 aa)) constitute a Ubiquitin-like domain. Ser65 bears the Phosphoserine; by PINK1 mark. Positions 71–96 (QRPQRKSHETNASGGDKPQSTPEGSI) are disordered. The tract at residues 77 to 237 (SHETNASGGD…LITNNSRSIP (161 aa)) is necessary for PINK1-dependent localization to mitochondria. Thr80 bears the Phosphothreonine mark. Residues 80-93 (TNASGGDKPQSTPE) are compositionally biased toward polar residues. The RING-type 0; atypical zinc finger occupies 141–225 (PTYHSFFVYC…PTSDKDTSVA (85 aa)). Thr175 is subject to Phosphothreonine; by PINK1. The interval 204–238 (TRAEFFFKCGAHPTSDKDTSVALNLITNNSRSIPC) is SYT11 binding 1. Phosphothreonine is present on Thr217. The TRIAD supradomain stretch occupies residues 234 to 465 (RSIPCIACTD…ACMGDHWFDV (232 aa)). Zn(2+) is bound by residues Cys238, Cys241, Cys253, His257, Cys260, Cys263, Cys289, Cys293, Cys332, and Cys337. The segment at 238-293 (CIACTDVRNPVLVFQCNHRHVICLDCFHLYCVTRLNDRQFVHDAQLGYSLPCVAGC) adopts an RING-type 1 zinc-finger fold. The interval 257–293 (HVICLDCFHLYCVTRLNDRQFVHDAQLGYSLPCVAGC) is SYT11 binding 2. The IBR-type zinc finger occupies 313 to 377 (NRYQQYGAEE…CKEAYHEGEC (65 aa)). Residue Lys349 forms a Glycyl lysine isopeptide (Lys-Gly) (interchain with G-Cter in ISG15) linkage. Residues Cys352, Cys360, Cys365, and Cys368 each contribute to the Zn(2+) site. Lys369 is covalently cross-linked (Glycyl lysine isopeptide (Lys-Gly) (interchain with G-Cter in ISG15)). Zn(2+)-binding residues include His373 and Cys377. Residues 378–410 (DSMFEASGATSQAYRVDQRAAEQARWEEASKET) are REP. Positions 418 and 421 each coordinate Zn(2+). Residues 418-449 (CPRCNVPIEKNGGCMHMKCPQPQCKLEWCWNC) form an RING-type 2; atypical zinc finger. Cys431 is a catalytic residue. Zn(2+) contacts are provided by Cys436, Cys441, Cys446, Cys449, Cys457, and His461.

It belongs to the RBR family. Parkin subfamily. As to quaternary structure, forms an E3 ubiquitin ligase complex with UBE2L3 or UBE2L6. Mediates 'Lys-63'-linked polyubiquitination by associating with UBE2V1. Part of a SCF-like complex, consisting of PRKN, CUL1 and FBXW7. Interacts with SNCAIP. Binds to the C2A and C2B domains of SYT11. Interacts and regulates the turnover of SEPTIN5. Part of a complex, including STUB1, HSP70 and GPR37. The amount of STUB1 in the complex increases during ER stress. STUB1 promotes the dissociation of HSP70 from PRKN and GPR37, thus facilitating PRKN-mediated GPR37 ubiquitination. HSP70 transiently associates with unfolded GPR37 and inhibits the E3 activity of PRKN, whereas, STUB1 enhances the E3 activity of PRKN through promotion of dissociation of HSP70 from PRKN-GPR37 complexes. Interacts with PSMD4 and PACRG. Interacts with LRRK2. Interacts with RANBP2. Interacts with SUMO1 but not SUMO2, which promotes nuclear localization and autoubiquitination. Interacts (via first RING-type domain) with AIMP2 (via N-terminus). Interacts with PSMA7 and RNF41. Interacts with PINK1. Forms a complex with PINK1 and PARK7. Interacts with CHPF, the interaction with isoform 2 may facilitate PRKN transport into the mitochondria. Interacts with MFN2 (phosphorylated), promotes PRKN localization in dysfunctional depolarized mitochondria. Interacts with FBXO7; this promotes translocation to dysfunctional depolarized mitochondria. Interacts with ZNF746. Interacts with heat shock protein 70 family members, including HSPA1L, HSPA1A and HSPA8; interaction HSPA1L promotes translocation to damaged mitochondria. Interacts with BAG4 and, to a lesser extent, BAG5; interaction with BAG4 inhibits translocation to damaged mitochondria. Forms a complex with PRKN and PARK7. Interacts with AMBRA1. In terms of processing, auto-ubiquitinates in an E2-dependent manner leading to its own degradation. Also polyubiquitinated by RNF41 for proteasomal degradation. S-nitrosylated. Post-translationally, phosphorylated. Activation requires phosphorylation at Ser-65 by PINK1 and binding to PINK1 phosphorylated ubiquitin. Phosphorylation at Thr-175 by PINK1 and at Thr-217 is important for mitochondrial localization. In terms of tissue distribution, largely confined to neuronal elements, including fibers and neuropil. Highly expressed at the forebrain level, in pyramidal cells of layer V, in various cortical regions and cerebellum. Expressed in the nucleus of diagonal band of Broca, nucleus basalis, bed nucleus of the stria terminalis, and olfactory tubercle. Moderate expression is seen in most neurons of the subthalamic nucleus, heart, skeletal muscle and testis. Moderate expression was found in frontal cortex, parietal cortex, cerebellum, heart, skeletal muscle and testis.

The protein resides in the cytoplasm. It localises to the cytosol. Its subcellular location is the nucleus. It is found in the endoplasmic reticulum. The protein localises to the mitochondrion. The protein resides in the mitochondrion outer membrane. It localises to the cell projection. Its subcellular location is the neuron projection. It is found in the postsynaptic density. The protein localises to the presynapse. The catalysed reaction is [E2 ubiquitin-conjugating enzyme]-S-ubiquitinyl-L-cysteine + [acceptor protein]-L-lysine = [E2 ubiquitin-conjugating enzyme]-L-cysteine + [acceptor protein]-N(6)-ubiquitinyl-L-lysine.. The protein operates within protein modification; protein ubiquitination. Its activity is regulated as follows. In the autoinhibited state the side chain of Phe-463 inserts into a hydrophobic groove in RING-0, occluding the ubiquitin acceptor site Cys-431, whereas the REP repressor element binds RING-1 and blocks its E2-binding site. Activation of PRKN requires 2 steps: (1) phosphorylation at Ser-65 by PINK1 and (2) binding to phosphorylated ubiquitin, leading to unlock repression of the catalytic Cys-431 by the RING-0 region via an allosteric mechanism and converting PRKN to its fully-active form. According to another report, phosphorylation at Ser-65 by PINK1 is not essential for activation and only binding to phosphorylated ubiquitin is essential to unlock repression. In addition, ISG15 conjugation positively regulates its ubiquitin E3 ligase activity by suppressing the intramolecular interaction that maintains its autoinhibited conformation. Functionally, functions within a multiprotein E3 ubiquitin ligase complex, catalyzing the covalent attachment of ubiquitin moieties onto substrate proteins. Substrates include SYT11 and VDAC1. Other substrates are BCL2, CCNE1, GPR37, RHOT1/MIRO1, MFN1, MFN2, STUB1, SNCAIP, SEPTIN5, TOMM20, USP30, ZNF746, MIRO1 and AIMP2. Mediates monoubiquitination as well as 'Lys-6', 'Lys-11', 'Lys-48'-linked and 'Lys-63'-linked polyubiquitination of substrates depending on the context. Participates in the removal and/or detoxification of abnormally folded or damaged protein by mediating 'Lys-63'-linked polyubiquitination of misfolded proteins such as PARK7: 'Lys-63'-linked polyubiquitinated misfolded proteins are then recognized by HDAC6, leading to their recruitment to aggresomes, followed by degradation. Mediates 'Lys-63'-linked polyubiquitination of a 22 kDa O-linked glycosylated isoform of SNCAIP, possibly playing a role in Lewy-body formation. Mediates monoubiquitination of BCL2, thereby acting as a positive regulator of autophagy. Protects against mitochondrial dysfunction during cellular stress, by acting downstream of PINK1 to coordinate mitochondrial quality control mechanisms that remove and replace dysfunctional mitochondrial components. Depending on the severity of mitochondrial damage and/or dysfunction, activity ranges from preventing apoptosis and stimulating mitochondrial biogenesis to regulating mitochondrial dynamics and eliminating severely damaged mitochondria via mitophagy. Activation and recruitment onto the outer membrane of damaged/dysfunctional mitochondria (OMM) requires PINK1-mediated phosphorylation of both PRKN and ubiquitin. After mitochondrial damage, functions with PINK1 to mediate the decision between mitophagy or preventing apoptosis by inducing either the poly- or monoubiquitination of VDAC1, respectively; polyubiquitination of VDAC1 promotes mitophagy, while monoubiquitination of VDAC1 decreases mitochondrial calcium influx which ultimately inhibits apoptosis. When cellular stress results in irreversible mitochondrial damage, promotes the autophagic degradation of dysfunctional depolarized mitochondria (mitophagy) by promoting the ubiquitination of mitochondrial proteins such as TOMM20, RHOT1/MIRO1, MFN1 and USP30. Preferentially assembles 'Lys-6'-, 'Lys-11'- and 'Lys-63'-linked polyubiquitin chains, leading to mitophagy. The PINK1-PRKN pathway also promotes fission of damaged mitochondria by PINK1-mediated phosphorylation which promotes the PRKN-dependent degradation of mitochondrial proteins involved in fission such as MFN2. This prevents the refusion of unhealthy mitochondria with the mitochondrial network or initiates mitochondrial fragmentation facilitating their later engulfment by autophagosomes. Regulates motility of damaged mitochondria via the ubiquitination and subsequent degradation of MIRO1 and MIRO2; in motor neurons, this likely inhibits mitochondrial intracellular anterograde transport along the axons which probably increases the chance of the mitochondria undergoing mitophagy in the soma. Involved in mitochondrial biogenesis via the 'Lys-48'-linked polyubiquitination of transcriptional repressor ZNF746/PARIS which leads to its subsequent proteasomal degradation and allows activation of the transcription factor PPARGC1A. Limits the production of reactive oxygen species (ROS). Regulates cyclin-E during neuronal apoptosis. In collaboration with CHPF isoform 2, may enhance cell viability and protect cells from oxidative stress. Independently of its ubiquitin ligase activity, protects from apoptosis by the transcriptional repression of p53/TP53. May protect neurons against alpha synuclein toxicity, proteasomal dysfunction, GPR37 accumulation, and kainate-induced excitotoxicity. May play a role in controlling neurotransmitter trafficking at the presynaptic terminal and in calcium-dependent exocytosis. May represent a tumor suppressor gene. The chain is E3 ubiquitin-protein ligase parkin from Rattus norvegicus (Rat).